The primary structure comprises 479 residues: Glycerol kinase 5 (479 aa).

ATP-binding residues include serine 20 and serine 21. Glycerol is bound by residues arginine 90, aspartate 267, and glutamine 268. Threonine 289, glycine 332, and glycine 432 together coordinate ATP.

The protein belongs to the FGGY kinase family.

The protein localises to the cytoplasm. The catalysed reaction is glycerol + ATP = sn-glycerol 3-phosphate + ADP + H(+). Its pathway is polyol metabolism; glycerol degradation via glycerol kinase pathway; sn-glycerol 3-phosphate from glycerol: step 1/1. In terms of biological role, skin-specific kinase that plays a key role in glycerol metabolism, catalyzing its phosphorylation to produce sn-glycerol 3-phosphate. Involved in skin-specific regulation of sterol regulatory element-binding protein (SREBP) processing and lipid biosynthesis. This Xenopus laevis (African clawed frog) protein is Glycerol kinase 5 (gk5).